We begin with the raw amino-acid sequence, 24 residues long: Antimicrobial peptide PGQ (24 aa).

This sequence belongs to the gastrin/cholecystokinin family. Magainin subfamily. In terms of tissue distribution, is synthesized in the stomach and stored in a novel granular multinucleated cell in the gastric mucosa. It is stored as active, processed peptides in large granules within the granular gland secretions of the skin.

Its subcellular location is the secreted. Its function is as follows. Antimicrobial peptide. This is Antimicrobial peptide PGQ (pgq) from Xenopus laevis (African clawed frog).